The sequence spans 191 residues: FMN-dependent NADH:quinone oxidoreductase 1 (191 aa).

Residues S10 and 16–18 (SVS) each bind FMN.

The protein belongs to the azoreductase type 1 family. Homodimer. The cofactor is FMN.

The enzyme catalyses 2 a quinone + NADH + H(+) = 2 a 1,4-benzosemiquinone + NAD(+). It carries out the reaction N,N-dimethyl-1,4-phenylenediamine + anthranilate + 2 NAD(+) = 2-(4-dimethylaminophenyl)diazenylbenzoate + 2 NADH + 2 H(+). In terms of biological role, quinone reductase that provides resistance to thiol-specific stress caused by electrophilic quinones. Functionally, also exhibits azoreductase activity. Catalyzes the reductive cleavage of the azo bond in aromatic azo compounds to the corresponding amines. The polypeptide is FMN-dependent NADH:quinone oxidoreductase 1 (Jannaschia sp. (strain CCS1)).